The following is a 159-amino-acid chain: MRIGHGFDVHAFGGEGPIIIGGVRIPYEKGLLAHSDGDVVLHALTDALLGAAALGDIGKLFPDTDPAFKGADSRELLREAWRRIQAKGYALGNVDVTIIAQAPRMLPHIPQMRVFIAEDLGCHMDDVNVKATTTEKLGFTGRGEGIACEAVALLIKATK.

A divalent metal cation contacts are provided by Asp8 and His10. 4-CDP-2-C-methyl-D-erythritol 2-phosphate contacts are provided by residues 8 to 10 and 34 to 35; these read DVH and HS. His42 provides a ligand contact to a divalent metal cation. Residues 56–58, 61–65, 100–106, 132–135, Phe139, and Arg142 each bind 4-CDP-2-C-methyl-D-erythritol 2-phosphate; these read DIG, FPDTD, AQAPRML, and TTTE.

Belongs to the IspF family. As to quaternary structure, homotrimer. The cofactor is a divalent metal cation.

The catalysed reaction is 4-CDP-2-C-methyl-D-erythritol 2-phosphate = 2-C-methyl-D-erythritol 2,4-cyclic diphosphate + CMP. It participates in isoprenoid biosynthesis; isopentenyl diphosphate biosynthesis via DXP pathway; isopentenyl diphosphate from 1-deoxy-D-xylulose 5-phosphate: step 4/6. In terms of biological role, involved in the biosynthesis of isopentenyl diphosphate (IPP) and dimethylallyl diphosphate (DMAPP), two major building blocks of isoprenoid compounds. Catalyzes the conversion of 4-diphosphocytidyl-2-C-methyl-D-erythritol 2-phosphate (CDP-ME2P) to 2-C-methyl-D-erythritol 2,4-cyclodiphosphate (ME-CPP) with a corresponding release of cytidine 5-monophosphate (CMP). The chain is 2-C-methyl-D-erythritol 2,4-cyclodiphosphate synthase from Escherichia coli O6:K15:H31 (strain 536 / UPEC).